The chain runs to 339 residues: Phenylalanine--tRNA ligase alpha subunit (339 aa).

Residue Glu254 coordinates Mg(2+).

The protein belongs to the class-II aminoacyl-tRNA synthetase family. Phe-tRNA synthetase alpha subunit type 1 subfamily. As to quaternary structure, tetramer of two alpha and two beta subunits. Requires Mg(2+) as cofactor.

The protein localises to the cytoplasm. It carries out the reaction tRNA(Phe) + L-phenylalanine + ATP = L-phenylalanyl-tRNA(Phe) + AMP + diphosphate + H(+). In Dictyoglomus thermophilum (strain ATCC 35947 / DSM 3960 / H-6-12), this protein is Phenylalanine--tRNA ligase alpha subunit.